The chain runs to 225 residues: MPLPADLPPHERPRERLLRHGPASLRDAELLALALRTGTRGRTAIDMGSQLLHRYGGLRGLFAASPQELMSLPGLGAAKAGTLAAILELARRAAEERLMRQQAMSEPGSVKRYFKTALANCAVEHCLALYLDSQLNLITSGELARGTLARASVYPREVVREALRHHAAALILAHNHPSGSAQPSQADRDFTRHMQQALALVEIRLLDHLIVAGDTVVSMAELGLL.

The MPN domain occupies 103-225 (AMSEPGSVKR…VVSMAELGLL (123 aa)). Zn(2+) contacts are provided by His174, His176, and Asp187. The JAMM motif motif lies at 174 to 187 (HNHPSGSAQPSQAD).

Belongs to the UPF0758 family.

This is UPF0758 protein Bpet3149 from Bordetella petrii (strain ATCC BAA-461 / DSM 12804 / CCUG 43448).